Consider the following 515-residue polypeptide: Alpha-1B adrenergic receptor (515 aa).

Topologically, residues 1-45 (MNPDLDTGHNTSAPAHWGELKDDNFTGPNQTSSNSTLPQLDVTRA) are extracellular. N-linked (GlcNAc...) asparagine glycosylation is found at asparagine 10, asparagine 24, and asparagine 34. The chain crosses the membrane as a helical span at residues 46–70 (ISVGLVLGAFILFAIVGNILVILSV). Residues 71 to 83 (ACNRHLRTPTNYF) are Cytoplasmic-facing. The helical transmembrane segment at 84–105 (IVNLAIADLLLSFTVLPFSATL) threads the bilayer. The Extracellular segment spans residues 106-115 (EVLGYWVLGR). A helical membrane pass occupies residues 116–141 (IFCDIWAAVDVLCCTASILSLCAISI). A disulfide bridge links cysteine 118 with cysteine 195. Residues 142 to 161 (DRYIGVRYSLQYPTLVTRRK) lie on the Cytoplasmic side of the membrane. The chain crosses the membrane as a helical span at residues 162–182 (AILALLSVWVLSTVISIGPLL). The Extracellular segment spans residues 183–201 (GWKEPAPNDDKECGVTEEP). A helical membrane pass occupies residues 202-224 (FYALFSSLGSFYIPLAVILVMYC). Residues 225 to 295 (RVYIVAKRTT…FSREKKAAKT (71 aa)) lie on the Cytoplasmic side of the membrane. At threonine 264 the chain carries Phosphothreonine. Residues 296 to 319 (LGIVVGMFILCWLPFFIALPLGSL) form a helical membrane-spanning segment. The Extracellular portion of the chain corresponds to 320–326 (FSTLKPP). A helical transmembrane segment spans residues 327–351 (DAVFKVVFWLGYFNSCLNPIIYPCS). The Cytoplasmic segment spans residues 352–515 (SKEFKRAFMR…SNMPLAPGHF (164 aa)). Cysteine 365 is lipidated: S-palmitoyl cysteine. The Nuclear localization signal motif lies at 368-378 (RGGRRRRRRRR). Disordered regions lie at residues 392 to 430 (GGSL…GYLG) and 474 to 515 (LGDP…PGHF). Composition is skewed to polar residues over residues 410–424 (SCMS…SASP) and 484–498 (GDTS…TDLA).

Belongs to the G-protein coupled receptor 1 family. Adrenergic receptor subfamily. ADRA1B sub-subfamily. Homo- and heterooligomer. Heterooligomerizes with ADRA1B homooligomers in cardiac myocytes. Interacts with CAVIN4.

It is found in the nucleus membrane. The protein resides in the cell membrane. Its subcellular location is the cytoplasm. It localises to the membrane. The protein localises to the caveola. Functionally, this alpha-adrenergic receptor mediates its action by association with G proteins that activate a phosphatidylinositol-calcium second messenger system. Its effect is mediated by G(q) and G(11) proteins. Nuclear ADRA1A-ADRA1B heterooligomers regulate phenylephrine (PE)-stimulated ERK signaling in cardiac myocytes. This is Alpha-1B adrenergic receptor (Adra1b) from Rattus norvegicus (Rat).